A 374-amino-acid polypeptide reads, in one-letter code: Tetraacyldisaccharide 4'-kinase (374 aa).

66–73 contributes to the ATP binding site; sequence TAGGTGKT.

This sequence belongs to the LpxK family.

The enzyme catalyses a lipid A disaccharide + ATP = a lipid IVA + ADP + H(+). Its pathway is glycolipid biosynthesis; lipid IV(A) biosynthesis; lipid IV(A) from (3R)-3-hydroxytetradecanoyl-[acyl-carrier-protein] and UDP-N-acetyl-alpha-D-glucosamine: step 6/6. Its function is as follows. Transfers the gamma-phosphate of ATP to the 4'-position of a tetraacyldisaccharide 1-phosphate intermediate (termed DS-1-P) to form tetraacyldisaccharide 1,4'-bis-phosphate (lipid IVA). In Syntrophus aciditrophicus (strain SB), this protein is Tetraacyldisaccharide 4'-kinase.